The primary structure comprises 446 residues: MENISDLWNSALKELEKKVSKPSYETWLKSTTAHNLKKDVLTITAPNEFARDWLESHYSELISETLYDLTGAKLAIRFIIPQSQAEEEIDLPPAKPNAAQDDSNHLPQSMLNPKYTFDTFVIGSGNRFAHAASLAVAEAPAKAYNPLFIYGGVGLGKTHLMHAIGHYVIEHNPNAKVVYLSSEKFTNEFINSIRDNKAVDFRNKYRNVDVLLIDDIQFLAGKEQTQEEFFHTFNALHEESKQIVISSDRPPKEIPTLEDRLRSRFEWGLITDITPPDLETRIAILRKKAKAEGLDIPNEVMLYIANQIDSNIRELEGALIRVVAYSSLINKDINADLAAEALKDIIPNSKPKIISIYDIQKAVGDVYQVKLEDFKAKKRTKSVAFPRQIAMYLSRELTDSSLPKIGEEFGGRDHTTVIHAHEKISKLLKTDTQLQKQVEEINDILK.

Positions 1-92 (MENISDLWNS…SQAEEEIDLP (92 aa)) are domain I, interacts with DnaA modulators. The interval 93–109 (PAKPNAAQDDSNHLPQS) is domain II. Positions 110–326 (MLNPKYTFDT…GALIRVVAYS (217 aa)) are domain III, AAA+ region. ATP is bound by residues Gly154, Gly156, Lys157, and Thr158. A domain IV, binds dsDNA region spans residues 327–446 (SLINKDINAD…QVEEINDILK (120 aa)).

The protein belongs to the DnaA family. Oligomerizes as a right-handed, spiral filament on DNA at oriC.

Its subcellular location is the cytoplasm. Plays an essential role in the initiation and regulation of chromosomal replication. ATP-DnaA binds to the origin of replication (oriC) to initiate formation of the DNA replication initiation complex once per cell cycle. Binds the DnaA box (a 9 base pair repeat at the origin) and separates the double-stranded (ds)DNA. Forms a right-handed helical filament on oriC DNA; dsDNA binds to the exterior of the filament while single-stranded (ss)DNA is stabiized in the filament's interior. The ATP-DnaA-oriC complex binds and stabilizes one strand of the AT-rich DNA unwinding element (DUE), permitting loading of DNA polymerase. After initiation quickly degrades to an ADP-DnaA complex that is not apt for DNA replication. Binds acidic phospholipids. This is Chromosomal replication initiator protein DnaA from Bacillus anthracis (strain A0248).